Here is a 1375-residue protein sequence, read N- to C-terminus: ARF guanine-nucleotide exchange factor GNL2 (1375 aa).

The SEC7 domain maps to 486-676; the sequence is HIRVRKAQKR…SELFQSIATN (191 aa). Glu-590 is a catalytic residue.

Homodimer. As to expression, preferentially expressed in mature pollen grains and growing pollen tubes.

The protein resides in the cytoplasm. It localises to the cytosol. Its subcellular location is the membrane. Its function is as follows. Activates the ARF proteins by exchanging bound GDP for free GTP. Plays a role in vesicular protein sorting. Essential for pollen germination. The sequence is that of ARF guanine-nucleotide exchange factor GNL2 (GNL2) from Arabidopsis thaliana (Mouse-ear cress).